We begin with the raw amino-acid sequence, 545 residues long: CTP synthase (545 aa).

The amidoligase domain stretch occupies residues 1–265 (MNGIKHIFIT…DKFVIKHLDL (265 aa)). Residue Ser-15 participates in CTP binding. A UTP-binding site is contributed by Ser-15. Residues 16-21 (SIGKGL) and Asp-73 each bind ATP. 2 residues coordinate Mg(2+): Asp-73 and Glu-141. Residues 148–150 (DIE), 188–193 (KTKPTQ), and Lys-224 contribute to the CTP site. UTP is bound by residues 188–193 (KTKPTQ) and Lys-224. The Glutamine amidotransferase type-1 domain maps to 290 to 534 (EIAIIGKYTG…VAAALARKEI (245 aa)). Gly-349 contributes to the L-glutamine binding site. The active-site Nucleophile; for glutamine hydrolysis is Cys-376. Residues 377–380 (LGMQ), Glu-400, and Arg-460 each bind L-glutamine. Active-site residues include His-507 and Glu-509.

The protein belongs to the CTP synthase family. As to quaternary structure, homotetramer.

It catalyses the reaction UTP + L-glutamine + ATP + H2O = CTP + L-glutamate + ADP + phosphate + 2 H(+). The enzyme catalyses L-glutamine + H2O = L-glutamate + NH4(+). It carries out the reaction UTP + NH4(+) + ATP = CTP + ADP + phosphate + 2 H(+). The protein operates within pyrimidine metabolism; CTP biosynthesis via de novo pathway; CTP from UDP: step 2/2. Allosterically activated by GTP, when glutamine is the substrate; GTP has no effect on the reaction when ammonia is the substrate. The allosteric effector GTP functions by stabilizing the protein conformation that binds the tetrahedral intermediate(s) formed during glutamine hydrolysis. Inhibited by the product CTP, via allosteric rather than competitive inhibition. Functionally, catalyzes the ATP-dependent amination of UTP to CTP with either L-glutamine or ammonia as the source of nitrogen. Regulates intracellular CTP levels through interactions with the four ribonucleotide triphosphates. This is CTP synthase from Tropheryma whipplei (strain Twist) (Whipple's bacillus).